A 146-amino-acid chain; its full sequence is Ribosome-binding factor A (146 aa).

Residues 122 to 134 (QQQFGSAEDVTSN) are compositionally biased toward polar residues. The tract at residues 122–146 (QQQFGSAEDVTSNDIDEADDTEGKA) is disordered. Over residues 135–146 (DIDEADDTEGKA) the composition is skewed to acidic residues.

It belongs to the RbfA family. Monomer. Binds 30S ribosomal subunits, but not 50S ribosomal subunits or 70S ribosomes.

It localises to the cytoplasm. One of several proteins that assist in the late maturation steps of the functional core of the 30S ribosomal subunit. Associates with free 30S ribosomal subunits (but not with 30S subunits that are part of 70S ribosomes or polysomes). Required for efficient processing of 16S rRNA. May interact with the 5'-terminal helix region of 16S rRNA. In Shewanella sp. (strain ANA-3), this protein is Ribosome-binding factor A.